Consider the following 291-residue polypeptide: ATP synthase gamma chain (291 aa).

Belongs to the ATPase gamma chain family. As to quaternary structure, F-type ATPases have 2 components, CF(1) - the catalytic core - and CF(0) - the membrane proton channel. CF(1) has five subunits: alpha(3), beta(3), gamma(1), delta(1), epsilon(1). CF(0) has three main subunits: a, b and c.

The protein localises to the cell inner membrane. Produces ATP from ADP in the presence of a proton gradient across the membrane. The gamma chain is believed to be important in regulating ATPase activity and the flow of protons through the CF(0) complex. The sequence is that of ATP synthase gamma chain from Ralstonia nicotianae (strain ATCC BAA-1114 / GMI1000) (Ralstonia solanacearum).